The following is a 146-amino-acid chain: Protein U1 (146 aa).

This sequence belongs to the nanovirus U1 protein family.

This Subterranean clover stunt virus (strain F) (SCSV) protein is Protein U1 (DNA-U1).